A 382-amino-acid polypeptide reads, in one-letter code: Lipid-A-disaccharide synthase (382 aa).

The protein belongs to the LpxB family.

The enzyme catalyses 2-N,3-O-bis[(3R)-3-hydroxytetradecanoyl]-alpha-D-glucosaminyl 1-phosphate + UDP-2-N,3-O-bis[(3R)-3-hydroxytetradecanoyl]-alpha-D-glucosamine = lipid A disaccharide (E. coli) + UDP + H(+). The catalysed reaction is a lipid X + a UDP-2-N,3-O-bis[(3R)-3-hydroxyacyl]-alpha-D-glucosamine = a lipid A disaccharide + UDP + H(+). It participates in glycolipid biosynthesis; lipid IV(A) biosynthesis; lipid IV(A) from (3R)-3-hydroxytetradecanoyl-[acyl-carrier-protein] and UDP-N-acetyl-alpha-D-glucosamine: step 5/6. In terms of biological role, condensation of UDP-2,3-diacylglucosamine and 2,3-diacylglucosamine-1-phosphate to form lipid A disaccharide, a precursor of lipid A, a phosphorylated glycolipid that anchors the lipopolysaccharide to the outer membrane of the cell. In Shigella boydii serotype 18 (strain CDC 3083-94 / BS512), this protein is Lipid-A-disaccharide synthase.